A 349-amino-acid polypeptide reads, in one-letter code: GTPase Obg (349 aa).

The Obg domain maps to 1–159 (MKFLDEAKVY…RWIWLRLKLI (159 aa)). In terms of domain architecture, OBG-type G spans 160–327 (ADAGLVGLPN…ALRALVEVIG (168 aa)). GTP is bound by residues 166 to 173 (GLPNAGKS), 191 to 195 (FTTLH), 212 to 215 (DIPG), 279 to 282 (NKID), and 308 to 310 (SGV). 2 residues coordinate Mg(2+): Ser-173 and Thr-193.

This sequence belongs to the TRAFAC class OBG-HflX-like GTPase superfamily. OBG GTPase family. As to quaternary structure, monomer. It depends on Mg(2+) as a cofactor.

The protein localises to the cytoplasm. Its function is as follows. An essential GTPase which binds GTP, GDP and possibly (p)ppGpp with moderate affinity, with high nucleotide exchange rates and a fairly low GTP hydrolysis rate. Plays a role in control of the cell cycle, stress response, ribosome biogenesis and in those bacteria that undergo differentiation, in morphogenesis control. This chain is GTPase Obg, found in Rhodopseudomonas palustris (strain BisB18).